Here is an 882-residue protein sequence, read N- to C-terminus: ABC transporter H family member 4 (882 aa).

3 consecutive transmembrane segments (helical) span residues 4–24 (WIKL…ISVF), 35–55 (LLFK…LLPW), and 79–101 (TNGP…YAIL). The region spanning 384–863 (FSYENKFSSE…NAQVYYKLLG (480 aa)) is the ABC transporter domain. 418–425 (GQNRSGKS) serves as a coordination point for ATP. Disordered stretches follow at residues 522–617 (FDPD…YSTI), 634–669 (SMSQ…NSGV), and 710–730 (NSGG…NQRS). Low complexity-rich tracts occupy residues 528–617 (IPPT…YSTI) and 647–667 (NGNN…INNS). Residues 715 to 724 (DESDDDDEEA) show a composition bias toward acidic residues.

The protein belongs to the ABC transporter superfamily. ABCH family.

The protein resides in the membrane. This is ABC transporter H family member 4 (abcH4) from Dictyostelium discoideum (Social amoeba).